We begin with the raw amino-acid sequence, 329 residues long: Probable CTD kinase subunit alpha homolog (329 aa).

One can recognise a Protein kinase domain in the interval 22-297; it reads YEKIRIIGEG…VEQVVGSKYF (276 aa). Residues 28–36 and lysine 49 each bind ATP; that span reads IGEGTFGQV. Aspartate 139 acts as the Proton acceptor in catalysis.

It belongs to the protein kinase superfamily. CMGC Ser/Thr protein kinase family. CDC2/CDKX subfamily. As to quaternary structure, component of the CTDK-I complex.

It is found in the nucleus. Its subcellular location is the nucleolus. It carries out the reaction [DNA-directed RNA polymerase] + ATP = phospho-[DNA-directed RNA polymerase] + ADP + H(+). Functionally, catalytic subunit of the CTDK-I complex, which hyperphosphorylates the C-terminal heptapeptide repeat domain (CTD) of the largest RNA polymerase II subunit. Involved in RNA polymerase II transcriptional elongation and pre-mRNA 3'-end processing. The chain is Probable CTD kinase subunit alpha homolog (CTK1) from Encephalitozoon cuniculi (strain GB-M1) (Microsporidian parasite).